We begin with the raw amino-acid sequence, 78 residues long: Delta-conotoxin-like Ai6.1 (78 aa).

The first 22 residues, 1–22 (MKLTCVMIVAVLFLTAWTFATA), serve as a signal peptide directing secretion. Positions 23–49 (DDPRNGLGNLFSNAHHEMKNPEASKLN) are excised as a propeptide. Cystine bridges form between cysteine 53–cysteine 68, cysteine 60–cysteine 72, and cysteine 67–cysteine 77.

It belongs to the conotoxin O1 superfamily. As to expression, expressed by the venom duct.

It is found in the secreted. In terms of biological role, delta-conotoxins bind to site 6 of voltage-gated sodium channels (Nav) and inhibit the inactivation process. In Conus ammiralis (Admiral cone), this protein is Delta-conotoxin-like Ai6.1.